The sequence spans 537 residues: Proline--tRNA ligase (537 aa).

This sequence belongs to the class-II aminoacyl-tRNA synthetase family. ProS type 3 subfamily. In terms of assembly, homodimer.

Its subcellular location is the cytoplasm. It catalyses the reaction tRNA(Pro) + L-proline + ATP = L-prolyl-tRNA(Pro) + AMP + diphosphate. Its function is as follows. Catalyzes the attachment of proline to tRNA(Pro) in a two-step reaction: proline is first activated by ATP to form Pro-AMP and then transferred to the acceptor end of tRNA(Pro). In Nanoarchaeum equitans (strain Kin4-M), this protein is Proline--tRNA ligase.